A 294-amino-acid polypeptide reads, in one-letter code: 4-hydroxybenzoate octaprenyltransferase (294 aa).

Helical transmembrane passes span 37–57 (LWAM…WIFF), 101–121 (LAVA…LNAL), 142–162 (FFAI…PMAF), 169–189 (VPFV…AYDT), 219–239 (IMIC…LLGL), 241–261 (WPYY…YTLI), and 271–293 (AAFR…AYLL).

It belongs to the UbiA prenyltransferase family. Mg(2+) serves as cofactor.

It is found in the cell inner membrane. The enzyme catalyses all-trans-octaprenyl diphosphate + 4-hydroxybenzoate = 4-hydroxy-3-(all-trans-octaprenyl)benzoate + diphosphate. It participates in cofactor biosynthesis; ubiquinone biosynthesis. In terms of biological role, catalyzes the prenylation of para-hydroxybenzoate (PHB) with an all-trans polyprenyl group. Mediates the second step in the final reaction sequence of ubiquinone-8 (UQ-8) biosynthesis, which is the condensation of the polyisoprenoid side chain with PHB, generating the first membrane-bound Q intermediate 3-octaprenyl-4-hydroxybenzoate. This is 4-hydroxybenzoate octaprenyltransferase from Cupriavidus metallidurans (strain ATCC 43123 / DSM 2839 / NBRC 102507 / CH34) (Ralstonia metallidurans).